The primary structure comprises 444 residues: MSSAKKIGLFACTGVVAGNMMGSGIALLPANLASIGGIAIWGWIISIIGAMSLAYVYARLATKNPQQGGPIAYAGEISPAFGFQTGVLYYHANWIGNLAIGITAVSYLSTFFPVLNDPVPAGIACIAIVWVFTFVNMLGGTWVSRLTTIGLVLVLIPVVMTAIVGWHWFDAATYAANWNTADTTDGHAIIKSILLCLWAFVGVESAAVSTGMVKNPKRTVPLATMLGTGLAGIVYIAATQVLSGMYPSSVMAASGAPFAISASTILGNWAAPLVSAFTAFACLTSLGSWMMLVGQAGVRAANDGNFPKVYGEVDSNGIPKKGLLLAAVKMTALMILITLMNSAGGKASDLFGELTGIAVLLTMLPYFYSCVDLIRFEGVNIRNFVSLICSVLGCVFCFIALMGASSFELAGTFIVSLIILMFYARKMHERQSHSMDNHTASNAH.

Transmembrane regions (helical) follow at residues 7 to 27 (IGLF…GIAL), 35 to 55 (IGGI…SLAY), 95 to 115 (IGNL…FPVL), 123 to 143 (IACI…GTWV), 149 to 169 (IGLV…WHWF), 193 to 213 (ILLC…TGMV), 222 to 242 (LATM…TQVL), 273 to 293 (LVSA…MMLV), 323 to 343 (LLLA…MNSA), 354 to 374 (LTGI…VDLI), 384 to 404 (FVSL…LMGA), and 405 to 425 (SSFE…FYAR).

This sequence belongs to the amino acid-polyamine-organocation (APC) superfamily. Basic amino acid/polyamine antiporter (APA) (TC 2.A.3.2) family.

It localises to the cell inner membrane. The catalysed reaction is cadaverine(in) + L-lysine(out) = cadaverine(out) + L-lysine(in). Its function is as follows. Under acidic conditions, in the presence of lysine, functions as a cadaverine:lysine antiporter that facilitates the excretion of cadaverine and the uptake of lysine. The sequence is that of Cadaverine/lysine antiporter (cadB) from Escherichia coli O157:H7.